The primary structure comprises 384 residues: GTPase Obg (384 aa).

The Obg domain maps to Met-1–Leu-159. The interval Ala-20–Trp-46 is disordered. The segment covering Gly-33 to Gly-43 has biased composition (gly residues). The 189-residue stretch at Ala-160–Thr-348 folds into the OBG-type G domain. GTP is bound by residues Gly-166–Ser-173, Phe-191–His-195, Asp-213–Gly-216, Asn-284–Asp-287, and Ser-329–Leu-331. Mg(2+) is bound by residues Ser-173 and Thr-193.

Belongs to the TRAFAC class OBG-HflX-like GTPase superfamily. OBG GTPase family. Monomer. It depends on Mg(2+) as a cofactor.

It localises to the cytoplasm. Its function is as follows. An essential GTPase which binds GTP, GDP and possibly (p)ppGpp with moderate affinity, with high nucleotide exchange rates and a fairly low GTP hydrolysis rate. Plays a role in control of the cell cycle, stress response, ribosome biogenesis and in those bacteria that undergo differentiation, in morphogenesis control. This Neisseria meningitidis serogroup C / serotype 2a (strain ATCC 700532 / DSM 15464 / FAM18) protein is GTPase Obg.